Here is a 41-residue protein sequence, read N- to C-terminus: uncharacterized protein (41 aa).

This is an uncharacterized protein from Treponema pallidum (strain Nichols).